Here is a 494-residue protein sequence, read N- to C-terminus: Guanosine-5'-triphosphate,3'-diphosphate pyrophosphatase (494 aa).

Belongs to the GppA/Ppx family. GppA subfamily.

The enzyme catalyses guanosine 3'-diphosphate 5'-triphosphate + H2O = guanosine 3',5'-bis(diphosphate) + phosphate + H(+). The protein operates within purine metabolism; ppGpp biosynthesis; ppGpp from GTP: step 2/2. In terms of biological role, catalyzes the conversion of pppGpp to ppGpp. Guanosine pentaphosphate (pppGpp) is a cytoplasmic signaling molecule which together with ppGpp controls the 'stringent response', an adaptive process that allows bacteria to respond to amino acid starvation, resulting in the coordinated regulation of numerous cellular activities. This chain is Guanosine-5'-triphosphate,3'-diphosphate pyrophosphatase, found in Escherichia coli O157:H7.